The following is a 738-amino-acid chain: DNA ligase (738 aa).

NAD(+) is bound by residues 48–52, 97–98, and Glu-136; these read DVVYD and SL. Residue Lys-138 is the N6-AMP-lysine intermediate of the active site. NAD(+)-binding residues include Arg-159, Glu-196, Lys-356, and Lys-380. Positions 474, 477, 492, and 497 each coordinate Zn(2+). Positions 659 to 738 constitute a BRCT domain; that stretch reads QLPQPLAGKT…SQLLELLEET (80 aa).

Belongs to the NAD-dependent DNA ligase family. LigA subfamily. It depends on Mg(2+) as a cofactor. Requires Mn(2+) as cofactor.

It carries out the reaction NAD(+) + (deoxyribonucleotide)n-3'-hydroxyl + 5'-phospho-(deoxyribonucleotide)m = (deoxyribonucleotide)n+m + AMP + beta-nicotinamide D-nucleotide.. Functionally, DNA ligase that catalyzes the formation of phosphodiester linkages between 5'-phosphoryl and 3'-hydroxyl groups in double-stranded DNA using NAD as a coenzyme and as the energy source for the reaction. It is essential for DNA replication and repair of damaged DNA. The chain is DNA ligase from Cyanothece sp. (strain PCC 7425 / ATCC 29141).